Consider the following 807-residue polypeptide: Protein FAR1-RELATED SEQUENCE 2 (807 aa).

The FAR1 domain occupies 52 to 138 (YFYREYARSV…VKEHNHEICP (87 aa)). The MULE domain occupies 219–315 (VVLFDTFYVR…CLWSVLSKIS (97 aa)). The SWIM-type zinc-finger motif lies at 499–535 (FFVALNNELLDACCSCHLFEYQGFLCKHAILVLQSAD). Residues 660–680 (EDATNRSEELRQETEQVSSRA) adopt a coiled-coil conformation. Polar residues predominate over residues 788–798 (GSSQFQGSDSS). A disordered region spans residues 788–807 (GSSQFQGSDSSHPSDHRLSN).

This sequence belongs to the FHY3/FAR1 family. As to expression, expressed in hypocotyls, rosette and cauline leaves, inflorescences stems, flowers and siliques.

The protein localises to the nucleus. Functionally, putative transcription activator involved in regulating light control of development. This is Protein FAR1-RELATED SEQUENCE 2 (FRS2) from Arabidopsis thaliana (Mouse-ear cress).